The following is a 485-amino-acid chain: Aspartyl/glutamyl-tRNA(Asn/Gln) amidotransferase subunit B (485 aa).

This sequence belongs to the GatB/GatE family. GatB subfamily. As to quaternary structure, heterotrimer of A, B and C subunits.

It catalyses the reaction L-glutamyl-tRNA(Gln) + L-glutamine + ATP + H2O = L-glutaminyl-tRNA(Gln) + L-glutamate + ADP + phosphate + H(+). It carries out the reaction L-aspartyl-tRNA(Asn) + L-glutamine + ATP + H2O = L-asparaginyl-tRNA(Asn) + L-glutamate + ADP + phosphate + 2 H(+). Functionally, allows the formation of correctly charged Asn-tRNA(Asn) or Gln-tRNA(Gln) through the transamidation of misacylated Asp-tRNA(Asn) or Glu-tRNA(Gln) in organisms which lack either or both of asparaginyl-tRNA or glutaminyl-tRNA synthetases. The reaction takes place in the presence of glutamine and ATP through an activated phospho-Asp-tRNA(Asn) or phospho-Glu-tRNA(Gln). The sequence is that of Aspartyl/glutamyl-tRNA(Asn/Gln) amidotransferase subunit B from Opitutus terrae (strain DSM 11246 / JCM 15787 / PB90-1).